Reading from the N-terminus, the 278-residue chain is uncharacterized protein (278 aa).

The first 20 residues, 1–20 (MSPLIVGTLIIILLSGLATA), serve as a signal peptide directing secretion. Gly96 carries the GPI-anchor amidated glycine lipid modification. The propeptide at 97–278 (TFLTSPTAKR…QLIMQTFNGS (182 aa)) is removed in mature form.

Its subcellular location is the cell membrane. This is an uncharacterized protein from Schizosaccharomyces pombe (strain 972 / ATCC 24843) (Fission yeast).